The sequence spans 388 residues: tRNA(Ile)-lysidine synthase (388 aa).

Residue 51–56 coordinates ATP; sequence SGGRDS.

It belongs to the tRNA(Ile)-lysidine synthase family.

Its subcellular location is the cytoplasm. The enzyme catalyses cytidine(34) in tRNA(Ile2) + L-lysine + ATP = lysidine(34) in tRNA(Ile2) + AMP + diphosphate + H(+). Functionally, ligates lysine onto the cytidine present at position 34 of the AUA codon-specific tRNA(Ile) that contains the anticodon CAU, in an ATP-dependent manner. Cytidine is converted to lysidine, thus changing the amino acid specificity of the tRNA from methionine to isoleucine. The polypeptide is tRNA(Ile)-lysidine synthase (Bifidobacterium longum (strain NCC 2705)).